The following is a 189-amino-acid chain: Selenoprotein S (189 aa).

The helical transmembrane segment at V29–I49 threads the bilayer. The segment covering I114–S125 has biased composition (basic and acidic residues). Residues I114 to G189 form a disordered region. Residues P136–K147 are compositionally biased toward low complexity. Basic and acidic residues predominate over residues P148–T157. Residue U188 is a non-standard amino acid, selenocysteine.

This sequence belongs to the selenoprotein S family.

Its subcellular location is the endoplasmic reticulum membrane. The protein resides in the cytoplasm. Involved in the degradation process of misfolded endoplasmic reticulum (ER) luminal proteins. Participates in the transfer of misfolded proteins from the ER to the cytosol, where they are destroyed by the proteasome in a ubiquitin-dependent manner. This is Selenoprotein S (vimp) from Xenopus tropicalis (Western clawed frog).